Reading from the N-terminus, the 1336-residue chain is Adhesion G protein-coupled receptor A2 (1336 aa).

A signal peptide spans 1 to 33 (MGAGGRRMPVPPARLLLLPLLPCLLLLAPGTRG). Residues 34-769 (APGCPVPIRG…AGGSGAGLHP (736 aa)) are Extracellular-facing. N84 and N101 each carry an N-linked (GlcNAc...) asparagine glycan. 4 LRR repeats span residues 85 to 106 (GTITLLLSNNKITGLRNGSFLG), 109 to 130 (LLEKLDLRSNVISTVQPGAFLG), 133 to 154 (ELKRLDLSNNRIGCLTSETFQG), and 157 to 178 (RLLRLNISGNIYSSLQPGVFDE). A glycan (N-linked (GlcNAc...) asparagine) is linked at N162. Residues 190–241 (EFLTCDCRLRWLLPWARNHSLQLSERTLCAYPSALHAHALSSLQESQLRCEG) enclose the LRRCT domain. Residues 247-344 (THYLIPSLRQ…GNTSKKVEIV (98 aa)) enclose the Ig-like domain. Cysteines 268 and 328 form a disulfide. N275 carries an N-linked (GlcNAc...) asparagine glycan. An RGD motif is present at residues 362 to 364 (RGD). In terms of domain architecture, GAIN-B spans 594–757 (FRCTTGRPNI…AVLMELNAFP (164 aa)). N-linked (GlcNAc...) asparagine glycans are attached at residues N602, N691, and N735. Residues 711 to 757 (AAWWNQDGPGGWSSEGCRLRYSQPNVSSLYCQHLGNVAVLMELNAFP) form a GPS region. C727 and C741 are joined by a disulfide. Residues 770–790 (VVYPCTALLLLCLFSTIITYI) traverse the membrane as a helical segment. Residues 791–805 (LNHSSIHVSRKGWHM) lie on the Cytoplasmic side of the membrane. A helical membrane pass occupies residues 806-826 (LLNLCFHMAMTSAVFVGGVTL). At 827–830 (TNYQ) the chain is on the extracellular side. Residues 831–851 (MVCQAVGITLHYSSLSSLLWM) form a helical membrane-spanning segment. At 852–884 (GVKARVLHKELSWRAPPLEEGEAAPPGPRPMLR) the chain is on the cytoplasmic side. The helical transmembrane segment at 885–905 (FYLIAGGIPLIICGITAAVNI) threads the bilayer. Over 906–922 (HNYRDHSPYCWLVWRPS) the chain is Extracellular. A helical membrane pass occupies residues 923 to 943 (LGAFYIPVALILPITWIYFLC). At 944–1016 (AGLHLRSHVA…DGVYSPGVQL (73 aa)) the chain is on the cytoplasmic side. The chain crosses the membrane as a helical span at residues 1017–1037 (GALMTTHFLYLAMWACGALAV). Residues 1038 to 1044 (SQRWLPR) are Extracellular-facing. A helical membrane pass occupies residues 1045–1065 (VVCSCLYGVAASALGLFVFTH). At 1066–1336 (HCARRRDVRA…TGLWKSETTV (271 aa)) the chain is on the cytoplasmic side. Positions 1084–1095 (ASPSASHVPARA) are enriched in low complexity. The disordered stretch occupies residues 1084–1310 (ASPSASHVPA…NGAPKGGKYE (227 aa)). S1104 is modified (phosphoserine). The segment covering 1110-1124 (GPASLKSSPSGSSGR) has biased composition (low complexity). Residues 1133-1143 (TNLQVAQSQVC) show a composition bias toward polar residues. Over residues 1166 to 1186 (PRHHNNLHHGRRVHKSRAKGH) the composition is skewed to basic residues. Residues 1213–1234 (SSESGSLHNSPSDSYPGSSRNS) are compositionally biased toward polar residues. Residues 1333–1336 (ETTV) carry the PDZ-binding motif.

This sequence belongs to the G-protein coupled receptor 2 family. Adhesion G-protein coupled receptor (ADGR) subfamily. Interacts with RECK; the interaction is direct. Interacts (via PDZ-binding motif) with DLG1 (via PDZ domains). The cleaved extracellular subunit interacts with the integrin heterodimer ITGAV:ITGB3. In terms of processing, glycosylated. Proteolytically cleaved into two subunits, an extracellular subunit and a seven-transmembrane subunit. Cleaved by thrombin (F2) and MMP1. Also cleaved by MMP9, with lower efficiency. Presence of the protein disulfide-isomerase P4HB at the cell surface is additionally required for shedding of the extracellular subunit, suggesting that the subunits are linked by disulfide bonds. Shedding is enhanced by the growth factor FGF2 and may promote cell survival during angiogenesis. As to expression, abundantly expressed in the vasculature of the developing embryo. Expression in normal adult tissues is specifically vascular with endothelial expression in CNS, including brain and retina and more widespread pericyte expression in the brain and organs, including the kidney, pancreas and corpus luteum.

The protein localises to the cell membrane. It localises to the cell projection. Its subcellular location is the filopodium. Its function is as follows. Endothelial receptor which functions together with RECK to enable brain endothelial cells to selectively respond to Wnt7 signals (WNT7A or WNT7B). Plays a key role in Wnt7-specific responses, such as endothelial cell sprouting and migration in the forebrain and neural tube, and establishment of the blood-brain barrier. Acts as a Wnt7-specific coactivator of canonical Wnt signaling: required to deliver RECK-bound Wnt7 to frizzled by assembling a higher-order RECK-ADGRA2-Fzd-LRP5-LRP6 complex. ADGRA2-tethering function does not rely on its G-protein coupled receptor (GPCR) structure but instead on its combined capacity to interact with RECK extracellularly and recruit the Dishevelled scaffolding protein intracellularly. Binds to the glycosaminoglycans heparin, heparin sulfate, chondroitin sulfate and dermatan sulfate. This chain is Adhesion G protein-coupled receptor A2, found in Mus musculus (Mouse).